The following is a 74-amino-acid chain: Acyclotide phyb-K (74 aa).

Residues Met1–Cys24 form the signal peptide. Positions Ile25–Ser43 are excised as a propeptide. 3 disulfide bridges follow: Cys47–Cys64, Cys51–Cys66, and Cys56–Cys71.

Post-translationally, contains 3 disulfide bonds. In terms of tissue distribution, expressed in midvein, lamina and periphery of leaves (at protein level).

Probably participates in a plant defense mechanism. The chain is Acyclotide phyb-K from Petunia hybrida (Petunia).